Consider the following 444-residue polypeptide: Xylose isomerase (444 aa).

Catalysis depends on residues His101 and Asp104. Mg(2+) contacts are provided by Glu232, Glu268, His271, Asp296, Asp307, Asp309, and Asp339.

This sequence belongs to the xylose isomerase family. In terms of assembly, homotetramer. Mg(2+) serves as cofactor.

Its subcellular location is the cytoplasm. It carries out the reaction alpha-D-xylose = alpha-D-xylulofuranose. The sequence is that of Xylose isomerase from Thermotoga petrophila (strain ATCC BAA-488 / DSM 13995 / JCM 10881 / RKU-1).